The following is a 270-amino-acid chain: Phospholysine phosphohistidine inorganic pyrophosphate phosphatase (270 aa).

Residues Asp-19 and Cys-21 each contribute to the Mg(2+) site. Residues 19 to 21, 56 to 57, and Lys-191 contribute to the substrate site; these read DMC and TN. Asp-216 lines the Mg(2+) pocket.

This sequence belongs to the HAD-like hydrolase superfamily. The cofactor is Mg(2+).

The protein resides in the cytoplasm. It localises to the nucleus. It catalyses the reaction diphosphate + H2O = 2 phosphate + H(+). Phosphatase that hydrolyzes imidodiphosphate, 3-phosphohistidine and 6-phospholysine. Has broad substrate specificity and can also hydrolyze inorganic diphosphate, but with lower efficiency. The protein is Phospholysine phosphohistidine inorganic pyrophosphate phosphatase (lhpp) of Danio rerio (Zebrafish).